The sequence spans 2115 residues: Nuclear mitotic apparatus protein 1 (2115 aa).

The segment at 1–212 (MTLHATRGAA…SPMGDILQTP (212 aa)) is head (Globular). A Phosphoserine modification is found at Ser-162. Thr-163 carries the phosphothreonine modification. A phosphoserine mark is found at Ser-169 and Ser-203. A Phosphothreonine modification is found at Thr-211. Residues 213–1699 (QFQMRRLKKQ…ADQQLRDLGK (1487 aa)) are a coiled coil. A Phosphoserine modification is found at Ser-271. Lys-379 carries the post-translational modification N6-acetyllysine. Residues Ser-388 and Ser-395 each carry the phosphoserine modification. A compositionally biased stretch (low complexity) spans 549–560 (LRHQVEQLSSSL). Disordered regions lie at residues 549 to 593 (LRHQ…EERE) and 746 to 766 (LVEQ…GRKG). Positions 561–581 (KQKEQQLKEVAEKQEATRQDH) are enriched in basic and acidic residues. A Phosphoserine modification is found at Ser-820. Position 891 is an N6-acetyllysine (Lys-891). Composition is skewed to basic and acidic residues over residues 926–950 (AGEQ…RQPE) and 996–1013 (QEER…TQER). 2 disordered regions span residues 926–958 (AGEQ…QQGR) and 988–1013 (LMES…TQER). A Phosphothreonine; by PLK1 modification is found at Thr-1047. Residues 1090–1102 (LKEQLAKKEKEHA) show a composition bias toward basic and acidic residues. Disordered stretches follow at residues 1090–1225 (LKEQ…RKNS) and 1275–1296 (ETAS…EVQS). 2 stretches are compositionally biased toward low complexity: residues 1103–1112 (SGSGAQSEAA) and 1133–1142 (EQQCQKQQEQ). Residues 1145–1163 (SLERSLEAERASRAERDSA) are compositionally biased toward basic and acidic residues. At Ser-1187 the chain carries Phosphoserine. Basic and acidic residues predominate over residues 1198–1224 (KVQDHSKAEDEWKAQVARGRQEAERKN). Residue Ser-1225 is modified to Phosphoserine. Basic and acidic residues predominate over residues 1283–1296 (AAERSSALREEVQS). Lys-1511 carries the post-translational modification N6-acetyllysine. Ser-1601 carries the phosphoserine modification. Residue Lys-1699 forms a Glycyl lysine isopeptide (Lys-Gly) (interchain with G-Cter in SUMO2) linkage. The segment at 1699–1876 (KFQVATDALK…NSALLSLPGY (178 aa)) is membrane-binding domain 1. The tract at residues 1700–2115 (FQVATDALKS…TPRAKGKAKH (416 aa)) is tail (Globular). 3 positions are modified to phosphoserine: Ser-1721, Ser-1724, and Ser-1728. Residues 1734–1761 (PLSITSKLPRTQPDGTSVPGEPASPISQ) form a disordered region. Residues 1735–1748 (LSITSKLPRTQPDG) are compositionally biased toward polar residues. A Tankyrase-binding domain motif is present at residues 1742-1748 (PRTQPDG). Phosphoserine is present on residues Ser-1757 and Ser-1760. A Glycyl lysine isopeptide (Lys-Gly) (interchain with G-Cter in SUMO1); alternate cross-link involves residue Lys-1766. Residue Lys-1766 forms a Glycyl lysine isopeptide (Lys-Gly) (interchain with G-Cter in SUMO2); alternate linkage. 2 positions are modified to phosphoserine; by PLK1: Ser-1769 and Ser-1772. Tyr-1774 is subject to Phosphotyrosine. A Phosphothreonine modification is found at Thr-1776. A Phosphoserine modification is found at Ser-1788. The 4.1-binding domain stretch occupies residues 1788 to 1810 (SSLDSLGDVFLDSGRKTRSARRR). Ser-1789 carries the post-translational modification Phosphoserine; by PLK1. Phosphoserine is present on residues Ser-1792 and Ser-1800. Thr-1804 carries the phosphothreonine modification. Residue Lys-1822 forms a Glycyl lysine isopeptide (Lys-Gly) (interchain with G-Cter in SUMO2) linkage. 2 disordered regions span residues 1826–1901 (EEPD…GRNS) and 1955–2115 (EMKT…KAKH). 2 positions are modified to phosphoserine: Ser-1830 and Ser-1833. The segment covering 1830–1857 (SANSSFYSTRSAPASQASLRATSSTQSL) has biased composition (polar residues). Ser-1834 carries the phosphoserine; by PLK1 modification. Tyr-1836 is subject to Phosphotyrosine. Position 1840 is a phosphoserine (Ser-1840). Ser-1844 carries the post-translational modification Phosphoserine; alternate. O-linked (GlcNAc) serine; alternate glycosylation is present at Ser-1844. Residues Ser-1862 and Ser-1887 each carry the phosphoserine modification. Residues 1879–1891 (TTRSSARRSQAGV) are compositionally biased toward polar residues. A tubulin-binding domain region spans residues 1882–1985 (SSARRSQAGV…AEGTGITTRQ (104 aa)). The tract at residues 1892–1926 (SSGAPPGRNSFYMGTCQDEPEQLDDWNRIAELQQR) is GPSM2-binding domain. The segment covering 1955–1966 (EMKTGDPQETLR) has biased composition (basic and acidic residues). At Ser-1969 the chain carries Phosphoserine. The interval 1981 to 2060 (ITTRQQRKRV…SILNTPKKLG (80 aa)) is membrane-binding domain 2. The short motif at 1984–1989 (RQQRKR) is the Nuclear localization signal element. Phosphoserine is present on Ser-1991. The residue at position 2000 (Thr-2000) is a Phosphothreonine. At Ser-2003 the chain carries Phosphoserine. Thr-2015 is subject to Phosphothreonine; by CDK1. The span at 2015-2032 (TPRDRHEGRKQSTTEAQK) shows a compositional bias: basic and acidic residues. Ser-2047 bears the Phosphoserine mark. A Phosphothreonine; by CDK1 modification is found at Thr-2055. Residues Ser-2062 and Ser-2077 each carry the phosphoserine modification. Ser-2087 carries the post-translational modification Phosphoserine; by CDK1. Residues 2089 to 2108 (RIATTTASAATAAAIGATPR) are compositionally biased toward low complexity. Thr-2106 carries the post-translational modification Phosphothreonine; by CDK1.

Homodimer. Also forms multiarm oligomers by association of C-terminal tail domains, oligomers may further assemble to form a hexagonal nuclear lattice-like network. Associates with the dynein-dynactin complex; this association promotes the transport and accumulation of NUMA1 at the mitotic spindle poles that is inhibited by the BRISC complex in a PLK1-dependent manner. Part of a spindle orientation complex at least composed of GNAI1, GPSM2 and NUMA1. Interacts (via C-terminus) with microtubules (MTs); this interaction is direct and promotes both MT bundle formation and stability in a dynein-dynactin complex- and CDK1-independent manner. Interacts with EPB41 and EPB41L2; these interactions are negatively regulated by CDK1 during metaphase and are important for anaphase-specific localization of NUMA1 in symmetrically dividing cells. Interacts (via C-terminus) with GPSM2 (via TPR repeats); this interaction is direct, prevented by competitive binding of INSC, is inhibited in a PLK1-dependent manner, blocks the association of NUMA1 with MTs and inhibits NUMA1-induced MT bundle formation, prevents the association of NUMA1 with SPAG5, induces mitotic spindle pole localization of GPSM2, both metaphase cell cortex localization of NUMA1 and mitotic spindle organization. Does not interact with GPSM2 during anaphase. Interacts (via C-terminus) with the nuclear importin alpha/importin beta receptor; this interaction is inhibited by RanGTP. Interacts (via C-terminus) with KPNB1; this interaction is inhibited by RanGTP and the BRISC complex. Interacts with ABRAXAS2 and the BRISC complex; these interactions regulate mitotic spindle assembly. Interacts (via N-terminal end of the coiled-coil domain) with RAE1; this interaction promotes mitotic spindle formation. Interacts (via C-terminus) with SPAG5 (via C-terminus); this interaction promotes the recruitment of SPAG5 to the MTs at spindle poles in a dynein-dynactin-dependent manner and regulates mitotic spindle organization and proper chromosome alignment during mitosis. Interacts with TNKS; this interaction occurs at the onset of mitosis. Interacts with TNKS2. Interacts with tubulin. Interacts with KHDC3L (via C-terminus). Post-translationally, phosphorylation and dephosphorylation on Thr-2055 regulates the extent of cortical NUMA1 and the dynein-dynactin complex localization during mitotic metaphase and anaphase. In metaphase, phosphorylation on Thr-2055 occurs in a kinase CDK1-dependent manner; this phosphorylation maintains low levels of cortical dynein-dynactin complex at metaphase, and hence proper spindle positioning. In anaphase, dephosphorylated on Thr-2055 by phosphatase PPP2CA; this dephosphorylation stimulates its membrane association and with the dynein-dynactin complex its enrichment at the cell cortex, and hence robust spindle elongation. Probably also phosphorylated on Thr-2015 and Ser-2087 by CDK1; these phosphorylations may regulate its cell cortex recruitment during metaphase and anaphase. Phosphorylated on Thr-1047, Ser-1769, Ser-1772, Ser-1789 and Ser-1834 by PLK1; these phosphorylations induce cortical dynein-dynactin complex dissociation from the NUMA1-GPSM2 complex and negatively regulates cortical dynein-dynactin complex localization. ADP-ribosylated by TNKS at the onset of mitosis; ADP-ribosylation is not required for its localization to spindle poles. In terms of processing, O-glycosylated during cytokinesis at sites identical or close to phosphorylation sites, this interferes with the phosphorylation status. Post-translationally, ubiquitinated with 'Lys-63'-linked polyubiquitin chains. Deubiquitination by the BRISC complex is important for the incorporation of NUMA1 into mitotic spindle poles and normal spindle pole function, probably by modulating interactions between NUMA1, dynein-dynactin complex and importin-beta.

It is found in the nucleus. The protein localises to the nucleoplasm. The protein resides in the nucleus matrix. It localises to the chromosome. Its subcellular location is the cytoplasm. It is found in the cytoskeleton. The protein localises to the microtubule organizing center. The protein resides in the centrosome. It localises to the spindle pole. Its subcellular location is the cell cortex. It is found in the cell membrane. The protein localises to the lateral cell membrane. The protein resides in the cytosol. Its function is as follows. Microtubule (MT)-binding protein that plays a role in the formation and maintenance of the spindle poles and the alignement and the segregation of chromosomes during mitotic cell division. Functions to tether the minus ends of MTs at the spindle poles, which is critical for the establishment and maintenance of the spindle poles. Plays a role in the establishment of the mitotic spindle orientation during metaphase and elongation during anaphase in a dynein-dynactin-dependent manner. In metaphase, part of a ternary complex composed of GPSM2 and G(i) alpha proteins, that regulates the recruitment and anchorage of the dynein-dynactin complex in the mitotic cell cortex regions situated above the two spindle poles, and hence regulates the correct oritentation of the mitotic spindle. During anaphase, mediates the recruitment and accumulation of the dynein-dynactin complex at the cell membrane of the polar cortical region through direct association with phosphatidylinositol 4,5-bisphosphate (PI(4,5)P2), and hence participates in the regulation of the spindle elongation and chromosome segregation. Also binds to other polyanionic phosphoinositides, such as phosphatidylinositol 3-phosphate (PIP), lysophosphatidic acid (LPA) and phosphatidylinositol triphosphate (PIP3), in vitro. Also required for proper orientation of the mitotic spindle during asymmetric cell divisions. Plays a role in mitotic MT aster assembly. Involved in anastral spindle assembly. Positively regulates TNKS protein localization to spindle poles in mitosis. Highly abundant component of the nuclear matrix where it may serve a non-mitotic structural role, occupies the majority of the nuclear volume. Required for epidermal differentiation and hair follicle morphogenesis. This Homo sapiens (Human) protein is Nuclear mitotic apparatus protein 1.